The sequence spans 127 residues: MAQSVPPGDIQTQPGTKIVFNAPYDDKHTYHIKVINSSARRIGYGIKTTNMKRLGVDPPCGVLDPKEAVLLAVSCDAFAFGQEDTNNDRITVEWTNTPDGAAKQFRREWFQGDGMVRRKNLPIEYNP.

The residue at position 2 (Ala2) is an N-acetylalanine. An MSP domain is found at 9–126 (DIQTQPGTKI…RRKNLPIEYN (118 aa)).

As to quaternary structure, helical subfilaments are built from MSP dimers; filaments are formed from two subfilaments coiling round one another; and filaments themselves supercoil to produce bundles. As to expression, sperm.

It is found in the cell projection. The protein localises to the pseudopodium. The protein resides in the cytoplasm. Its subcellular location is the cytoskeleton. Functionally, central component in molecular interactions underlying sperm crawling. Forms an extensive filament system that extends from sperm villipoda, along the leading edge of the pseudopod. The protein is Major sperm protein 19/31/40/45/50/51/53/59/61/65/81/113/142 (msp-19) of Caenorhabditis elegans.